Consider the following 165-residue polypeptide: Ubiquitin-like protein 4B (165 aa).

The 76-residue stretch at 1 to 76 (MFLTVKLLLG…ISVVVRPLEK (76 aa)) folds into the Ubiquitin-like domain. The segment at 139–165 (EPLAQPTGEREPEVLSPNKEEEKEAVQ) is disordered. Residues 146 to 165 (GEREPEVLSPNKEEEKEAVQ) show a composition bias toward basic and acidic residues.

It localises to the cytoplasm. The sequence is that of Ubiquitin-like protein 4B (UBL4B) from Bos taurus (Bovine).